The sequence spans 346 residues: Phosphoribosylformylglycinamidine cyclo-ligase (346 aa).

Belongs to the AIR synthase family.

Its subcellular location is the cytoplasm. The catalysed reaction is 2-formamido-N(1)-(5-O-phospho-beta-D-ribosyl)acetamidine + ATP = 5-amino-1-(5-phospho-beta-D-ribosyl)imidazole + ADP + phosphate + H(+). It participates in purine metabolism; IMP biosynthesis via de novo pathway; 5-amino-1-(5-phospho-D-ribosyl)imidazole from N(2)-formyl-N(1)-(5-phospho-D-ribosyl)glycinamide: step 2/2. This Geobacillus kaustophilus (strain HTA426) protein is Phosphoribosylformylglycinamidine cyclo-ligase.